The following is a 315-amino-acid chain: ATP synthase gamma chain (315 aa).

The protein belongs to the ATPase gamma chain family. As to quaternary structure, F-type ATPases have 2 components, CF(1) - the catalytic core - and CF(0) - the membrane proton channel. CF(1) has five subunits: alpha(3), beta(3), gamma(1), delta(1), epsilon(1). CF(0) has three main subunits: a, b and c.

It is found in the cellular thylakoid membrane. Its function is as follows. Produces ATP from ADP in the presence of a proton gradient across the membrane. The gamma chain is believed to be important in regulating ATPase activity and the flow of protons through the CF(0) complex. This Nostoc punctiforme (strain ATCC 29133 / PCC 73102) protein is ATP synthase gamma chain.